We begin with the raw amino-acid sequence, 101 residues long: Ubiquitin-related modifier 1 (101 aa).

Gly-101 is subject to 1-thioglycine. Residue Gly-101 forms a Glycyl lysine isopeptide (Gly-Lys) (interchain with K-? in acceptor proteins) linkage.

Belongs to the URM1 family. Component of a complex at least composed of URM1, CTU2/NCS2 and CTU1/ATPBD3. Post-translationally, C-terminal thiocarboxylation occurs in 2 steps, it is first acyl-adenylated (-COAMP) via the hesA/moeB/thiF part of MOCS3, then thiocarboxylated (-COSH) via the rhodanese domain of MOCS3.

Its subcellular location is the cytoplasm. Its pathway is tRNA modification; 5-methoxycarbonylmethyl-2-thiouridine-tRNA biosynthesis. Its function is as follows. Acts as a sulfur carrier required for 2-thiolation of mcm(5)S(2)U at tRNA wobble positions of cytosolic tRNA(Lys), tRNA(Glu) and tRNA(Gln). Serves as sulfur donor in tRNA 2-thiolation reaction by being thiocarboxylated (-COSH) at its C-terminus by MOCS3. The sulfur is then transferred to tRNA to form 2-thiolation of mcm(5)S(2)U. Also acts as a ubiquitin-like protein (UBL) that is covalently conjugated via an isopeptide bond to lysine residues of target proteins such as MOCS3, ATPBD3, CTU2, USP15 and CAS. The thiocarboxylated form serves as substrate for conjugation and oxidative stress specifically induces the formation of UBL-protein conjugates. This chain is Ubiquitin-related modifier 1, found in Homo sapiens (Human).